The following is a 117-amino-acid chain: Large ribosomal subunit protein bL19 (117 aa).

It belongs to the bacterial ribosomal protein bL19 family.

This protein is located at the 30S-50S ribosomal subunit interface and may play a role in the structure and function of the aminoacyl-tRNA binding site. The sequence is that of Large ribosomal subunit protein bL19 from Micrococcus luteus (strain ATCC 4698 / DSM 20030 / JCM 1464 / CCM 169 / CCUG 5858 / IAM 1056 / NBRC 3333 / NCIMB 9278 / NCTC 2665 / VKM Ac-2230) (Micrococcus lysodeikticus).